We begin with the raw amino-acid sequence, 448 residues long: Methylenetetrahydrofolate--tRNA-(uracil-5-)-methyltransferase TrmFO (448 aa).

Residue glycine 10 to glycine 15 participates in FAD binding.

The protein belongs to the MnmG family. TrmFO subfamily. The cofactor is FAD.

Its subcellular location is the cytoplasm. The enzyme catalyses uridine(54) in tRNA + (6R)-5,10-methylene-5,6,7,8-tetrahydrofolate + NADH + H(+) = 5-methyluridine(54) in tRNA + (6S)-5,6,7,8-tetrahydrofolate + NAD(+). It carries out the reaction uridine(54) in tRNA + (6R)-5,10-methylene-5,6,7,8-tetrahydrofolate + NADPH + H(+) = 5-methyluridine(54) in tRNA + (6S)-5,6,7,8-tetrahydrofolate + NADP(+). Functionally, catalyzes the folate-dependent formation of 5-methyl-uridine at position 54 (M-5-U54) in all tRNAs. The protein is Methylenetetrahydrofolate--tRNA-(uracil-5-)-methyltransferase TrmFO of Lactococcus lactis subsp. cremoris (strain MG1363).